Reading from the N-terminus, the 387-residue chain is 3-ketoacyl-CoA thiolase (387 aa).

Cys91 acts as the Acyl-thioester intermediate in catalysis. Catalysis depends on proton acceptor residues His343 and Cys373.

The protein belongs to the thiolase-like superfamily. Thiolase family. Heterotetramer of two alpha chains (FadB) and two beta chains (FadA).

The protein localises to the cytoplasm. The enzyme catalyses an acyl-CoA + acetyl-CoA = a 3-oxoacyl-CoA + CoA. Its pathway is lipid metabolism; fatty acid beta-oxidation. Its function is as follows. Catalyzes the final step of fatty acid oxidation in which acetyl-CoA is released and the CoA ester of a fatty acid two carbons shorter is formed. In Pectobacterium carotovorum subsp. carotovorum (strain PC1), this protein is 3-ketoacyl-CoA thiolase.